The following is a 367-amino-acid chain: METKESTMNDQNTHTRSRNKAIPYLPRYMKPGQPCVVCGDDATGLHYRAITCEGCKGFFRRTVQQKIVYKCKSIERCEISKISRNICQFCRFQKCLRNGMTKSLVLNETERIAKRKMIIDNRERRKLEHLRTLLKASSLADKQDEFQSRIDQVTANYCKIMDNSLEYKFKSNKKSERLIELTKLVSQQVRQFAETIEICDTLNPSEKEEIIAKSWLVVKILQIIHEFNPTECCLMLANNTTYIPAKGNYSELDKTTKIFENLINLAISFNCMQLDNRQLALLSALLIYNPENVKRSKEKIDKIHVELWKCLQSISEMHDDDSSDLLHWPNFLVRIPYLILTVSKMQDFFQDENNINAIANILLFKFT.

The nuclear receptor DNA-binding region spans 32–107 (GQPCVVCGDD…NGMTKSLVLN (76 aa)). NR C4-type zinc fingers lie at residues 35–55 (CVVCGDDATGLHYRAITCEGC) and 71–95 (CKSIERCEISKISRNICQFCRFQKC). One can recognise an NR LBD domain in the interval 145–367 (EFQSRIDQVT…IANILLFKFT (223 aa)).

This sequence belongs to the nuclear hormone receptor family.

The protein localises to the nucleus. The protein is Nuclear hormone receptor-like 1 (nhr-1) of Onchocerca volvulus.